Consider the following 950-residue polypeptide: Glycine dehydrogenase (decarboxylating) (950 aa).

At K698 the chain carries N6-(pyridoxal phosphate)lysine.

The protein belongs to the GcvP family. In terms of assembly, the glycine cleavage system is composed of four proteins: P, T, L and H. Requires pyridoxal 5'-phosphate as cofactor.

The enzyme catalyses N(6)-[(R)-lipoyl]-L-lysyl-[glycine-cleavage complex H protein] + glycine + H(+) = N(6)-[(R)-S(8)-aminomethyldihydrolipoyl]-L-lysyl-[glycine-cleavage complex H protein] + CO2. The glycine cleavage system catalyzes the degradation of glycine. The P protein binds the alpha-amino group of glycine through its pyridoxal phosphate cofactor; CO(2) is released and the remaining methylamine moiety is then transferred to the lipoamide cofactor of the H protein. In Neisseria gonorrhoeae (strain ATCC 700825 / FA 1090), this protein is Glycine dehydrogenase (decarboxylating).